The primary structure comprises 1453 residues: DNA mismatch repair protein Mlh3 (1453 aa).

Disordered stretches follow at residues 624–650 (EHSFKNYVRPGPTRAQETFGNRTRHSV) and 933–960 (GVIPTSDSATQDNSFNKNSKTHSNSNTT). The segment covering 935-944 (IPTSDSATQD) has biased composition (polar residues). Positions 945 to 960 (NSFNKNSKTHSNSNTT) are enriched in low complexity.

It belongs to the DNA mismatch repair MutL/HexB family. In terms of assembly, heterodimer of MLH1 and MLH3. Interacts with MTMR15/FAN1. In terms of tissue distribution, ubiquitous.

The protein localises to the nucleus. In terms of biological role, probably involved in the repair of mismatches in DNA. The protein is DNA mismatch repair protein Mlh3 (MLH3) of Homo sapiens (Human).